The chain runs to 127 residues: Large ribosomal subunit protein uL18 (127 aa).

Belongs to the universal ribosomal protein uL18 family. As to quaternary structure, part of the 50S ribosomal subunit; part of the 5S rRNA/L5/L18/L25 subcomplex. Contacts the 5S and 23S rRNAs.

Its function is as follows. This is one of the proteins that bind and probably mediate the attachment of the 5S RNA into the large ribosomal subunit, where it forms part of the central protuberance. This chain is Large ribosomal subunit protein uL18, found in Streptomyces coelicolor (strain ATCC BAA-471 / A3(2) / M145).